Here is a 261-residue protein sequence, read N- to C-terminus: MARGLKKHLKRLNAPKHWMLDKLGGAFAPKPSSGPHKSRECLPLILILRNRLKYALTYREVVSILMQRHILVDGKIHFCIRLSDVVSIPKTNENFRLLYDTKGRFRLHSIRDEESKFKLCKVRSVQFGQKGIPYINTYDGRTIRYPDPLIKANDTIKLDLETNKITDFIKFDVGNVVMVTGGRNRGRVGVIKNREKHKGSFETIHVQDATGHEFATRLGNVFTIGKGTKPWVSLPKGKGIKLTILEEAKKRQAAAQTAATA.

One can recognise an S4 RNA-binding domain in the interval 42–100 (LPLILILRNRLKYALTYREVVSILMQRHILVDGKIHFCIRLSDVVSIPKTNENFRLLYD).

This sequence belongs to the eukaryotic ribosomal protein eS4 family.

The protein resides in the cytoplasm. This Prunus armeniaca (Apricot) protein is Small ribosomal subunit protein eS4 (RPS4).